The chain runs to 68 residues: Guanine nucleotide-binding protein G(I)/G(S)/G(O) subunit gamma-5 (68 aa).

An N-acetylserine modification is found at S2. S2 is modified (phosphoserine). Position 65 is a cysteine methyl ester (C65). Residue C65 is the site of S-geranylgeranyl cysteine attachment. A propeptide spans 66 to 68 (removed in mature form); sequence SFL.

This sequence belongs to the G protein gamma family. As to quaternary structure, g proteins are composed of 3 units, alpha, beta and gamma. As to expression, expressed in a variety of tissues.

The protein localises to the cell membrane. In terms of biological role, guanine nucleotide-binding proteins (G proteins) are involved as a modulator or transducer in various transmembrane signaling systems. The beta and gamma chains are required for the GTPase activity, for replacement of GDP by GTP, and for G protein-effector interaction. This is Guanine nucleotide-binding protein G(I)/G(S)/G(O) subunit gamma-5 (GNG5) from Bos taurus (Bovine).